Reading from the N-terminus, the 647-residue chain is Beta-galactosidase (647 aa).

An N-terminal signal peptide occupies residues 1–24 (MLRVPLCTPLPLLALLQLLGAAHG). The propeptide occupies 25-29 (IYNVT). A glycan (N-linked (GlcNAc...) asparagine) is linked at Asn27. Residues Tyr84, Glu130, and Asn188 each coordinate substrate. Glu189 serves as the catalytic Proton donor. A disulfide bridge connects residues Cys196 and Cys231. A glycan (N-linked (GlcNAc...) asparagine) is linked at Asn248. Glu269 (nucleophile) is an active-site residue. Tyr334 serves as a coordination point for substrate. N-linked (GlcNAc...) asparagine glycans are attached at residues Asn500, Asn504, Asn510, Asn544, Asn557, and Asn617. Cys628 and Cys636 are oxidised to a cystine.

This sequence belongs to the glycosyl hydrolase 35 family. Homodimer. May form higher multimers.

It localises to the lysosome. The enzyme catalyses Hydrolysis of terminal non-reducing beta-D-galactose residues in beta-D-galactosides.. Its function is as follows. Cleaves beta-linked terminal galactosyl residues from gangliosides, glycoproteins, and glycosaminoglycans. The chain is Beta-galactosidase (Glb1) from Mus musculus (Mouse).